A 121-amino-acid polypeptide reads, in one-letter code: Large ribosomal subunit protein uL14 (121 aa).

This sequence belongs to the universal ribosomal protein uL14 family. In terms of assembly, part of the 50S ribosomal subunit. Forms a cluster with proteins L3 and L19. In the 70S ribosome, L14 and L19 interact and together make contacts with the 16S rRNA in bridges B5 and B8.

In terms of biological role, binds to 23S rRNA. Forms part of two intersubunit bridges in the 70S ribosome. This is Large ribosomal subunit protein uL14 from Prochlorococcus marinus (strain NATL1A).